A 220-amino-acid polypeptide reads, in one-letter code: Protein-L-isoaspartate O-methyltransferase (220 aa).

S64 is a catalytic residue.

Belongs to the methyltransferase superfamily. L-isoaspartyl/D-aspartyl protein methyltransferase family.

The protein resides in the cytoplasm. The catalysed reaction is [protein]-L-isoaspartate + S-adenosyl-L-methionine = [protein]-L-isoaspartate alpha-methyl ester + S-adenosyl-L-homocysteine. Functionally, catalyzes the methyl esterification of L-isoaspartyl residues in peptides and proteins that result from spontaneous decomposition of normal L-aspartyl and L-asparaginyl residues. It plays a role in the repair and/or degradation of damaged proteins. The protein is Protein-L-isoaspartate O-methyltransferase of Thermococcus onnurineus (strain NA1).